A 359-amino-acid polypeptide reads, in one-letter code: MALVSRRSTRSESTSITKEEHTGEGSLTKLFFRWLVTLEGDQDINDGKGYISLPNVSNYIFFLGGRFRTVKGAKPLWLGVLLAIVCPMVLFSIFEAHKLWHTQNGYKVLVIFFYYFWVITLASFIRTATSDPGVLPRNIHLSQLRNNYQIPQEYYNLITLPTHSSISKDITIKYCPSCRIWRPPRSSHCSTCNVCVMVHDHHCIWVNNCIGKRNYRFFLIFLLGAILSSVILLTNCAIHIARESGGPRDCPVAILLLCYAGLTLWYPAILFTYHIFMAGNQQTTREFLKGIGSKKNPVFHRVVKEENIYNKGSFLKNMGHLMLEPRGPSFVSARKPHEAGDWRFMDLSPAHSFEKIQKI.

The disordered stretch occupies residues 1 to 21 (MALVSRRSTRSESTSITKEEH). At 1 to 75 (MALVSRRSTR…RFRTVKGAKP (75 aa)) the chain is on the cytoplasmic side. A helical transmembrane segment spans residues 76–96 (LWLGVLLAIVCPMVLFSIFEA). Over 97-104 (HKLWHTQN) the chain is Lumenal. A helical membrane pass occupies residues 105-125 (GYKVLVIFFYYFWVITLASFI). The Cytoplasmic segment spans residues 126–217 (RTATSDPGVL…NCIGKRNYRF (92 aa)). The region spanning 173-223 (KYCPSCRIWRPPRSSHCSTCNVCVMVHDHHCIWVNNCIGKRNYRFFLIFLL) is the DHHC domain. Catalysis depends on cysteine 203, which acts as the S-palmitoyl cysteine intermediate. A helical membrane pass occupies residues 218-238 (FLIFLLGAILSSVILLTNCAI). The Lumenal portion of the chain corresponds to 239-250 (HIARESGGPRDC). The helical transmembrane segment at 251 to 271 (PVAILLLCYAGLTLWYPAILF) threads the bilayer. Topologically, residues 272–359 (TYHIFMAGNQ…AHSFEKIQKI (88 aa)) are cytoplasmic.

Belongs to the DHHC palmitoyltransferase family. ERF2/ZDHHC9 subfamily. Interacts with SHR5. Post-translationally, autopalmitoylated.

It localises to the endoplasmic reticulum membrane. The catalysed reaction is L-cysteinyl-[protein] + hexadecanoyl-CoA = S-hexadecanoyl-L-cysteinyl-[protein] + CoA. The ERF2-SHR5 complex is a palmitoyltransferase specific for Ras proteins. Palmitoylates RAS2, which is required for its proper plasma membrane localization. The chain is Palmitoyltransferase ERF2 (ERF2) from Saccharomyces cerevisiae (strain ATCC 204508 / S288c) (Baker's yeast).